The following is a 171-amino-acid chain: NADH-quinone oxidoreductase subunit I (171 aa).

2 consecutive 4Fe-4S ferredoxin-type domains span residues 63-92 and 102-131; these read RRYE…IESD and TRYD…ETQI. Cys-72, Cys-75, Cys-78, Cys-82, Cys-111, Cys-114, Cys-117, and Cys-121 together coordinate [4Fe-4S] cluster.

It belongs to the complex I 23 kDa subunit family. NDH-1 is composed of 14 different subunits. Subunits NuoA, H, J, K, L, M, N constitute the membrane sector of the complex. [4Fe-4S] cluster is required as a cofactor.

It localises to the cell inner membrane. The catalysed reaction is a quinone + NADH + 5 H(+)(in) = a quinol + NAD(+) + 4 H(+)(out). In terms of biological role, NDH-1 shuttles electrons from NADH, via FMN and iron-sulfur (Fe-S) centers, to quinones in the respiratory chain. The immediate electron acceptor for the enzyme in this species is believed to be ubiquinone. Couples the redox reaction to proton translocation (for every two electrons transferred, four hydrogen ions are translocated across the cytoplasmic membrane), and thus conserves the redox energy in a proton gradient. The sequence is that of NADH-quinone oxidoreductase subunit I from Paracidovorax citrulli (strain AAC00-1) (Acidovorax citrulli).